We begin with the raw amino-acid sequence, 530 residues long: PC4 and SFRS1-interacting protein (530 aa).

The PWWP domain maps to 1–64 (MTRDFKPGDL…PKDIFPYSEN (64 aa)). Residue K75 forms a Glycyl lysine isopeptide (Lys-Gly) (interchain with G-Cter in SUMO2) linkage. The tract at residues 88-349 (PKVKFSSQQA…VEKKRETSMD (262 aa)) is disordered. A compositionally biased stretch (polar residues) spans 92 to 104 (FSSQQAATKQSNA). S102, S105, and S106 each carry phosphoserine. Basic and acidic residues predominate over residues 113 to 135 (KETSVSKEDTDHEEKASNEDVTK). A phosphothreonine mark is found at T115 and T122. S129 carries the post-translational modification Phosphoserine. T141 carries the post-translational modification Phosphothreonine. The span at 144–153 (AARRGRKRKA) shows a compositional bias: basic residues. Residues 146–156 (RRGRKRKAEKQ) carry the Nuclear localization signal motif. Phosphothreonine is present on T167. Residues S177 and S206 each carry the phosphoserine modification. The span at 213–261 (EEDKSKKKGQEEKQPKKQPKKDEEGQKEEDKPRKEPDKKEGKKEVESKR) shows a compositional bias: basic and acidic residues. At S271 the chain carries Phosphoserine. At T272 the chain carries Phosphothreonine. 2 positions are modified to phosphoserine: S273 and S275. Positions 274–283 (DSEEEGDDQE) are enriched in acidic residues. The segment covering 287–302 (KRKGGRNFQTAHRRNM) has biased composition (basic residues). The span at 305–349 (GQHEKEAADRKRKQEEQMETEQQNKDEGKKPEVKKVEKKRETSMD) shows a compositional bias: basic and acidic residues. Coiled-coil stretches lie at residues 306-334 (QHEK…EGKK) and 371-395 (NRCI…KHTE). The tract at residues 340 to 417 (VEKKRETSMD…VSQVIMEKST (78 aa)) is integrase-binding domain (IBD). A Phosphoserine modification is found at S434. Phosphothreonine is present on T437. S443 is subject to Phosphoserine. Residues 446 to 473 (EQRQHEEANKTKDQGKKGPNKKLEKEQT) are compositionally biased toward basic and acidic residues. Residues 446 to 530 (EQRQHEEANK…ISLKDSTLDN (85 aa)) are disordered. The span at 474-494 (GSKTLNGGSDAQDGNQPQHNG) shows a compositional bias: polar residues. The span at 498 to 530 (EDSKDNHEASTKKKPSSEERETEISLKDSTLDN) shows a compositional bias: basic and acidic residues. Residue S514 is modified to Phosphoserine. R517 is modified (citrulline). At S522 the chain carries Phosphoserine. Residue T527 is modified to Phosphothreonine.

The protein belongs to the HDGF family. In terms of assembly, monomer. Interacts with IFRD1/PC4. Isoform 2 interacts with SFRS1. Isoform 1 interacts (via IBD domain) with POGZ (via IBM motif) and CDCA7L (via IBM motifs). Interacts (via IBD domain) with KMT2A (via IBM motifs) with a moderate affinity whereas interacts with the KMT2A-MEN1 complex with a greater affinity; MEN1 enhances interaction of KMT2A with PSIP1. Interacts with fusion protein KMT2A-MLLT3. Interacts (via IBD domain) with IWS1 (via IBM motif), MED1 (via IBM motif) and DBF4 (via IBM motifs). As to quaternary structure, (Microbial infection) Interacts (via IBD domain) with human HIV-1 integrase protein (HIV-1 IN), determining its nuclear localization, its tight association with chromatin and its protection from the proteasome. (Microbial infection) Interacts with HIV-2 IN. Post-translationally, citrullinated by PADI4. As to expression, widely expressed. Expressed at high level in the thymus. Expressed in fetal and adult brain. Expressed in neurons, but not astrocytes. Markedly elevated in fetal as compared to adult brain. In the adult brain, expressed in the subventricular zone (SVZ), in hippocampus, and undetectable elsewhere. In the fetal brain, expressed in the germinal neuroepithelium and cortical plate regions.

The protein localises to the nucleus. In terms of biological role, transcriptional coactivator involved in neuroepithelial stem cell differentiation and neurogenesis. Involved in particular in lens epithelial cell gene regulation and stress responses. May play an important role in lens epithelial to fiber cell terminal differentiation. May play a protective role during stress-induced apoptosis. Isoform 2 is a more general and stronger transcriptional coactivator. Isoform 2 may also act as an adapter to coordinate pre-mRNA splicing. Cellular cofactor for lentiviral integration. This Homo sapiens (Human) protein is PC4 and SFRS1-interacting protein (PSIP1).